The primary structure comprises 506 residues: Lysine--tRNA ligase (506 aa).

The Mg(2+) site is built by Glu416 and Glu423.

Belongs to the class-II aminoacyl-tRNA synthetase family. Homodimer. Requires Mg(2+) as cofactor.

It localises to the cytoplasm. The catalysed reaction is tRNA(Lys) + L-lysine + ATP = L-lysyl-tRNA(Lys) + AMP + diphosphate. The polypeptide is Lysine--tRNA ligase (Pelotomaculum thermopropionicum (strain DSM 13744 / JCM 10971 / SI)).